The following is a 371-amino-acid chain: UDP-N-acetylglucosamine--N-acetylmuramyl-(pentapeptide) pyrophosphoryl-undecaprenol N-acetylglucosamine transferase (371 aa).

UDP-N-acetyl-alpha-D-glucosamine contacts are provided by residues 15-17, asparagine 126, arginine 172, serine 199, isoleucine 256, 275-280, and glutamine 301; these read TGG and ALTVSE.

Belongs to the glycosyltransferase 28 family. MurG subfamily.

The protein resides in the cell inner membrane. It catalyses the reaction di-trans,octa-cis-undecaprenyl diphospho-N-acetyl-alpha-D-muramoyl-L-alanyl-D-glutamyl-meso-2,6-diaminopimeloyl-D-alanyl-D-alanine + UDP-N-acetyl-alpha-D-glucosamine = di-trans,octa-cis-undecaprenyl diphospho-[N-acetyl-alpha-D-glucosaminyl-(1-&gt;4)]-N-acetyl-alpha-D-muramoyl-L-alanyl-D-glutamyl-meso-2,6-diaminopimeloyl-D-alanyl-D-alanine + UDP + H(+). The protein operates within cell wall biogenesis; peptidoglycan biosynthesis. Its function is as follows. Cell wall formation. Catalyzes the transfer of a GlcNAc subunit on undecaprenyl-pyrophosphoryl-MurNAc-pentapeptide (lipid intermediate I) to form undecaprenyl-pyrophosphoryl-MurNAc-(pentapeptide)GlcNAc (lipid intermediate II). The chain is UDP-N-acetylglucosamine--N-acetylmuramyl-(pentapeptide) pyrophosphoryl-undecaprenol N-acetylglucosamine transferase from Francisella tularensis subsp. mediasiatica (strain FSC147).